Here is a 1025-residue protein sequence, read N- to C-terminus: Multidrug resistance protein MdtC (1025 aa).

A run of 12 helical transmembrane segments spans residues 3–23, 333–353, 360–380, 387–407, 431–451, 463–483, 528–548, 853–873, 875–895, 897–917, 953–973, and 984–1004; these read FFALFIYRPVATILLSVAITL, EVEQTLIISVALVILVVFLFL, IIPAVSVPVSLIGTFAAMYLC, LSLMALTIATGFVVDDAIVVL, VGFTVLSMSLSLVAVFLPLLL, FAVTLSVAIGISLLVSLTLTP, LVGVVLLGTIALNIWLYISIP, VILIIAAIATVYIVLGILYES, VHPLTILSTLPSAGVGALLAL, LFNAPFSLIALIGIMLLIGIV, PIMMTTLAALFGALPLVLSGG, and ITIVGGLVMSQLLTLYTTPVV.

Belongs to the resistance-nodulation-cell division (RND) (TC 2.A.6) family. MdtC subfamily. In terms of assembly, part of a tripartite efflux system composed of MdtA, MdtB and MdtC. MdtC forms a heteromultimer with MdtB.

The protein localises to the cell inner membrane. The polypeptide is Multidrug resistance protein MdtC (Shigella sonnei (strain Ss046)).